The primary structure comprises 162 residues: Caveolin-2 (162 aa).

Residues 1 to 86 (MGLETEKADV…FEISKYIIYK (86 aa)) are Cytoplasmic-facing. At Y19 the chain carries Phosphotyrosine; by SRC. A phosphoserine mark is found at S20 and S23. Y27 is subject to Phosphotyrosine; by SRC. Residues 87–107 (FLTVFLAIPLAFAAGILFATL) constitute an intramembrane region (helical). Topologically, residues 108–162 (SCLHIWITMPFVKTCLMVLPSVQTIWKSVTDVAIAPLCTSVGRSFSSVSLQLSHD) are cytoplasmic.

Belongs to the caveolin family. Monomer or homodimer. Interacts with CAV1; the interaction forms a stable heterooligomeric complex that is required for targeting to lipid rafts and for caveolae formation. Tyrosine phosphorylated forms do not form heterooligomers with the Tyr-19-phosphorylated form existing as a monomer or dimer, and the Tyr-27-form as a monomer only. Interacts (tyrosine phosphorylated form) with the SH2 domain-containing proteins, RASA1, NCK1 and SRC. Interacts (tyrosine phosphorylated form) with INSR, the interaction (Tyr-27-phosphorylated form) is increased on insulin stimulation. Interacts (Tyr-19 phosphorylated form) with MAPK1 (phosphorylated form); the interaction, promoted by insulin, leads to nuclear location and MAPK1 activation. Interacts with STAT3; the interaction is increased on insulin-induced tyrosine phosphorylation leading to STAT activation. In terms of processing, phosphorylated on serine and tyrosine residues. CAV1 promotes phosphorylation on Ser-23 which then targets the complex to the plasma membrane, lipid rafts and caveolae. Phosphorylation on both Tyr-19 and Tyr-27 is required for insulin-induced 'Ser-727' phosphorylation of STAT3 and its activation. Phosphorylation on Tyr-19 is required for insulin-induced phosphorylation of MAPK1 and DNA binding of STAT3. Tyrosine phosphorylation is induced by both EGF and insulin.

Its subcellular location is the nucleus. It localises to the cytoplasm. The protein resides in the golgi apparatus membrane. It is found in the cell membrane. The protein localises to the membrane. Its subcellular location is the caveola. Its function is as follows. May act as a scaffolding protein within caveolar membranes. Interacts directly with G-protein alpha subunits and can functionally regulate their activity. Acts as an accessory protein in conjunction with CAV1 in targeting to lipid rafts and driving caveolae formation. Positive regulator of cellular mitogenesis of the MAPK signaling pathway. Required for the insulin-stimulated nuclear translocation and activation of MAPK1 and STAT3, and the subsequent regulation of cell cycle progression. This is Caveolin-2 (CAV2) from Dasypus novemcinctus (Nine-banded armadillo).